Here is a 313-residue protein sequence, read N- to C-terminus: MLLTDRNTSGTTFTLLGFSDYPELQVPLFLVFLAIYNVTVLGNIGLIVIIKINPKLHTPMYFFLSQLSFVDFCYSSIIAPKMLVNLVVKDRTISFLGCVVQFFFFCTFVVTESFLLAVMAYDRFVAICNPLLYTVNMSQKLCVLLVVGSYAWGVSCSLELTCSALKLCFHGFNTINHFFCEFSSLLSLSCSDTYINQWLLFFLATFNEISTLLIVLTSYAFIVVTILKMRSVSGRRKAFSTCASHLTAITIFHGTILFLYCVPNSKNSRHTVKVASVFYTVVIPMLNPLIYSLRNKDVKDTVTEILDTKVFSY.

The Extracellular segment spans residues 1-26; the sequence is MLLTDRNTSGTTFTLLGFSDYPELQV. N-linked (GlcNAc...) asparagine glycosylation occurs at Asn-7. A helical membrane pass occupies residues 27–47; that stretch reads PLFLVFLAIYNVTVLGNIGLI. Residues 48-55 lie on the Cytoplasmic side of the membrane; sequence VIIKINPK. The helical transmembrane segment at 56 to 76 threads the bilayer; that stretch reads LHTPMYFFLSQLSFVDFCYSS. Topologically, residues 77–100 are extracellular; it reads IIAPKMLVNLVVKDRTISFLGCVV. An intrachain disulfide couples Cys-98 to Cys-190. Residues 101–121 form a helical membrane-spanning segment; it reads QFFFFCTFVVTESFLLAVMAY. Topologically, residues 122–140 are cytoplasmic; the sequence is DRFVAICNPLLYTVNMSQK. A helical membrane pass occupies residues 141–161; the sequence is LCVLLVVGSYAWGVSCSLELT. Over 162 to 197 the chain is Extracellular; the sequence is CSALKLCFHGFNTINHFFCEFSSLLSLSCSDTYINQ. A helical transmembrane segment spans residues 198–218; the sequence is WLLFFLATFNEISTLLIVLTS. Residues 219 to 238 lie on the Cytoplasmic side of the membrane; that stretch reads YAFIVVTILKMRSVSGRRKA. A helical transmembrane segment spans residues 239 to 259; sequence FSTCASHLTAITIFHGTILFL. At 260–272 the chain is on the extracellular side; that stretch reads YCVPNSKNSRHTV. Residues 273-293 form a helical membrane-spanning segment; it reads KVASVFYTVVIPMLNPLIYSL. Residues 294–313 lie on the Cytoplasmic side of the membrane; it reads RNKDVKDTVTEILDTKVFSY.

The protein belongs to the G-protein coupled receptor 1 family.

The protein localises to the cell membrane. Functionally, odorant receptor. The polypeptide is Olfactory receptor 5D18 (OR5D18) (Homo sapiens (Human)).